The sequence spans 107 residues: MLNAFAFPQTNECFPAKRGFCANERTKCLNPKMPSKSMFGGSVSENLFLSKIRIGLSFPLPLSEIKLQNQDFRLEGQMSSFDPFVDESKALVRRLGQKVKAKSFLCR.

It is found in the mitochondrion. This is an uncharacterized protein from Arabidopsis thaliana (Mouse-ear cress).